The following is a 161-amino-acid chain: Pathogenesis-related protein 1 (161 aa).

A signal peptide spans 1–26 (MKVTSYSRILIILAALVGALVVPLKA). Residues 34–149 (VNAHNQARSQ…NGGTIISCNY (116 aa)) form the SCP domain. 3 disulfide bridges follow: Cys-70–Cys-138, Cys-113–Cys-117, and Cys-133–Cys-147.

Belongs to the CRISP family. In terms of tissue distribution, expressed in flowers, stems and roots but not in leaves.

Probably involved in the defense reaction of plants against pathogens. The chain is Pathogenesis-related protein 1 from Arabidopsis thaliana (Mouse-ear cress).